We begin with the raw amino-acid sequence, 330 residues long: Ig gamma-2A chain C region, A allele (330 aa).

Ig-like domains lie at 6 to 98 (PSVY…KKIE), 121 to 220 (PSVF…RTIS), and 229 to 325 (PQVY…KSFS). Cystine bridges form between C27–C82, C144–C204, and C250–C308. N180 carries N-linked (GlcNAc...) asparagine glycosylation.

The polypeptide is Ig gamma-2A chain C region, A allele (Ighg) (Mus musculus (Mouse)).